A 199-amino-acid chain; its full sequence is Adenylyl-sulfate kinase (199 aa).

Positions 1–21 (MSQSSNITWHDSEVTKSDRQQ) are disordered. Over residues 10 to 19 (HDSEVTKSDR) the composition is skewed to basic and acidic residues. 34–41 (GLSGSGKS) contacts ATP. The active-site Phosphoserine intermediate is the serine 108.

Belongs to the APS kinase family.

It carries out the reaction adenosine 5'-phosphosulfate + ATP = 3'-phosphoadenylyl sulfate + ADP + H(+). The protein operates within sulfur metabolism; hydrogen sulfide biosynthesis; sulfite from sulfate: step 2/3. Functionally, catalyzes the synthesis of activated sulfate. The sequence is that of Adenylyl-sulfate kinase from Staphylococcus haemolyticus (strain JCSC1435).